Reading from the N-terminus, the 357-residue chain is Spore coat protein I (357 aa).

The protein belongs to the CotS family.

The protein localises to the spore coat. The polypeptide is Spore coat protein I (cotI) (Bacillus subtilis (strain 168)).